Here is a 617-residue protein sequence, read N- to C-terminus: DNA-(apurinic or apyrimidinic site) endonuclease (617 aa).

The disordered stretch occupies residues 74–99 (IKNSDEQNNSNNNNNNSSSSNFCSNN). Residues 81-99 (NNSNNNNNNSSSSNFCSNN) are compositionally biased toward low complexity. Residues N284 and E317 each coordinate Mg(2+). Positions 326–349 (SEPCDNKNKNKNKNDGIRDRGKIK) are disordered. Basic and acidic residues predominate over residues 329–349 (CDNKNKNKNKNDGIRDRGKIK). Positions 474, 476, 606, and 607 each coordinate Mg(2+). H607 (proton acceptor) is an active-site residue.

This sequence belongs to the DNA repair enzymes AP/ExoA family. Requires Mg(2+) as cofactor. Mn(2+) serves as cofactor. Post-translationally, may be proteolytically cleaved into a 64 kDa form.

The protein resides in the mitochondrion. The enzyme catalyses Exonucleolytic cleavage in the 3'- to 5'-direction to yield nucleoside 5'-phosphates.. Its activity is regulated as follows. Apurinic/apyrimidinic (AP) endonuclease activity is maximal at low Mg(2+) (0.5-2 mM) with no activity seen at high concentrations (more than 10 mM). 3'-5' exonuclease activity is maximal in the range of 0.5-2 mM Mg(2+) with activity seen up to 10 mM Mg(2+). Multifunctional protein that plays a central role in mitochondrial DNA base excision repair (BER) pathway induced by oxidative stress. Has apurinic/apyrimidinic (AP) endonuclease activity towards double-stranded DNA (dsDNA). Has nucleotide incision repair (NIR) activity; acts on dsDNA with oxidized bases thymine glycol and 5,6-dihydro-2'-deoxyuridine. Has 3'-5' exonuclease; can use dsDNA templates with 3'-OH termini including blunt-end, gapped and mismatched 3'-recessed. Has 3'-phosphatase activity; cleaves 3'-phosphate from blunt, recessed and gapped dsDNA templates, followed by 3'-5' exonuclease activity. Has RNase H-like activity; cleaves RNA on 3'-recessed RNA-DNA duplex. Plays a role in merosome infection of host erythrocytes. The chain is DNA-(apurinic or apyrimidinic site) endonuclease from Plasmodium falciparum (isolate 3D7).